A 245-amino-acid polypeptide reads, in one-letter code: Small ribosomal subunit protein uS2 (245 aa).

Belongs to the universal ribosomal protein uS2 family.

This chain is Small ribosomal subunit protein uS2, found in Pseudomonas putida (strain W619).